The primary structure comprises 63 residues: U-reduvitoxin-Pr4a (63 aa).

Residues Met-1–Ala-19 form the signal peptide. Disulfide bonds link Cys-24-Cys-40, Cys-31-Cys-45, and Cys-39-Cys-52.

It belongs to the venom Ptu1-like knottin family. As to expression, expressed by the venom gland.

It localises to the secreted. Binds reversibly and blocks P/Q-type voltage-gated calcium channels (Cav). The chain is U-reduvitoxin-Pr4a from Platymeris rhadamanthus (Red spot assassin bug).